Consider the following 218-residue polypeptide: Peroxynitrite isomerase 2 (218 aa).

The disordered stretch occupies residues 1–24 (MTPAGDTPERGSGDRAVAEAAERA). Residues 7 to 24 (TPERGSGDRAVAEAAERA) are compositionally biased toward basic and acidic residues. Residues 65 to 71 (GVWRGEG) carry the GXWXGXG motif. Heme b contacts are provided by Lys181 and His208.

This sequence belongs to the nitrobindin family. In terms of assembly, homodimer. It depends on heme b as a cofactor.

The catalysed reaction is peroxynitrite = nitrate. It participates in nitrogen metabolism. Its function is as follows. Heme-binding protein able to scavenge peroxynitrite and to protect free L-tyrosine against peroxynitrite-mediated nitration, by acting as a peroxynitrite isomerase that converts peroxynitrite to nitrate. Therefore, this protein likely plays a role in peroxynitrite sensing and in the detoxification of reactive nitrogen and oxygen species (RNS and ROS, respectively). Is able to bind nitric oxide (NO) in vitro, but may act as a sensor of peroxynitrite levels in vivo. The sequence is that of Peroxynitrite isomerase 2 from Mycolicibacterium smegmatis (strain ATCC 700084 / mc(2)155) (Mycobacterium smegmatis).